Reading from the N-terminus, the 198-residue chain is Proteasome subunit beta 2 (198 aa).

Residues 1 to 4 (MVLA) constitute a propeptide, removed in mature form; by autocatalysis. The active-site Nucleophile is T5.

The protein belongs to the peptidase T1B family. As to quaternary structure, the 20S proteasome core is composed of 14 alpha and 14 beta subunits that assemble into four stacked heptameric rings, resulting in a barrel-shaped structure. The two inner rings, each composed of seven catalytic beta subunits, are sandwiched by two outer rings, each composed of seven alpha subunits. The catalytic chamber with the active sites is on the inside of the barrel. Has a gated structure, the ends of the cylinder being occluded by the N-termini of the alpha-subunits. Is capped at one or both ends by the proteasome regulatory ATPase, PAN.

The protein localises to the cytoplasm. The catalysed reaction is Cleavage of peptide bonds with very broad specificity.. With respect to regulation, the formation of the proteasomal ATPase PAN-20S proteasome complex, via the docking of the C-termini of PAN into the intersubunit pockets in the alpha-rings, triggers opening of the gate for substrate entry. Interconversion between the open-gate and close-gate conformations leads to a dynamic regulation of the 20S proteasome proteolysis activity. Functionally, component of the proteasome core, a large protease complex with broad specificity involved in protein degradation. This Korarchaeum cryptofilum (strain OPF8) protein is Proteasome subunit beta 2.